The chain runs to 59 residues: uncharacterized protein (59 aa).

A helical transmembrane segment spans residues 6-26 (WWLVVFAVFVFLFDTLLMQWI).

It is found in the membrane. This is an uncharacterized protein from Escherichia coli O157:H7.